The chain runs to 93 residues: Conotoxin Mr105 (93 aa).

An N-terminal signal peptide occupies residues 1–22 (MQRGAVLLGVVALLVLWPQAGA). Residues 23-33 (ELYDVNDPDVR) constitute a propeptide that is removed on maturation.

Belongs to the F superfamily. Post-translationally, contains 4 disulfide bonds. As to expression, expressed by the venom duct.

The protein localises to the secreted. The protein is Conotoxin Mr105 of Conus marmoreus (Marble cone).